Reading from the N-terminus, the 332-residue chain is tRNA-dihydrouridine synthase B (332 aa).

Residues 16–18 (PMA) and glutamine 70 each bind FMN. The active-site Proton donor is cysteine 100. FMN is bound by residues lysine 139, 200–202 (NGD), and 224–225 (GR).

This sequence belongs to the Dus family. DusB subfamily. The cofactor is FMN.

The enzyme catalyses a 5,6-dihydrouridine in tRNA + NAD(+) = a uridine in tRNA + NADH + H(+). The catalysed reaction is a 5,6-dihydrouridine in tRNA + NADP(+) = a uridine in tRNA + NADPH + H(+). In terms of biological role, catalyzes the synthesis of 5,6-dihydrouridine (D), a modified base found in the D-loop of most tRNAs, via the reduction of the C5-C6 double bond in target uridines. In Pasteurella multocida (strain Pm70), this protein is tRNA-dihydrouridine synthase B.